Reading from the N-terminus, the 801-residue chain is Phenylalanine--tRNA ligase beta subunit (801 aa).

In terms of domain architecture, tRNA-binding spans 39-147 (GGGLDEVVVA…TDLPLGVPVF (109 aa)). Positions 401–477 (LPRRTVRFRV…RLNGYNNIPV (77 aa)) constitute a B5 domain. Mg(2+)-binding residues include aspartate 455, aspartate 461, glutamate 464, and glutamate 465. Residues 708–801 (SRFPDTFRDI…LVKKLAVTIR (94 aa)) enclose the FDX-ACB domain.

Belongs to the phenylalanyl-tRNA synthetase beta subunit family. Type 1 subfamily. In terms of assembly, tetramer of two alpha and two beta subunits. Mg(2+) is required as a cofactor.

The protein localises to the cytoplasm. The enzyme catalyses tRNA(Phe) + L-phenylalanine + ATP = L-phenylalanyl-tRNA(Phe) + AMP + diphosphate + H(+). The protein is Phenylalanine--tRNA ligase beta subunit of Geobacter metallireducens (strain ATCC 53774 / DSM 7210 / GS-15).